A 278-amino-acid polypeptide reads, in one-letter code: Large ribosomal subunit protein uL2 (278 aa).

The disordered stretch occupies residues 222-278 (GVVMNPIDHPHGGGEGRTSGGRHPVTPWGKPTKGKKTRSNKSTNKFILISRHKRKKK).

It belongs to the universal ribosomal protein uL2 family. As to quaternary structure, part of the 50S ribosomal subunit. Forms a bridge to the 30S subunit in the 70S ribosome.

Its function is as follows. One of the primary rRNA binding proteins. Required for association of the 30S and 50S subunits to form the 70S ribosome, for tRNA binding and peptide bond formation. It has been suggested to have peptidyltransferase activity; this is somewhat controversial. Makes several contacts with the 16S rRNA in the 70S ribosome. The protein is Large ribosomal subunit protein uL2 of Afipia carboxidovorans (strain ATCC 49405 / DSM 1227 / KCTC 32145 / OM5) (Oligotropha carboxidovorans).